Consider the following 261-residue polypeptide: Imidazole glycerol phosphate synthase subunit HisF (261 aa).

Active-site residues include Asp16 and Asp135.

Belongs to the HisA/HisF family. As to quaternary structure, heterodimer of HisH and HisF.

It localises to the cytoplasm. The enzyme catalyses 5-[(5-phospho-1-deoxy-D-ribulos-1-ylimino)methylamino]-1-(5-phospho-beta-D-ribosyl)imidazole-4-carboxamide + L-glutamine = D-erythro-1-(imidazol-4-yl)glycerol 3-phosphate + 5-amino-1-(5-phospho-beta-D-ribosyl)imidazole-4-carboxamide + L-glutamate + H(+). Its pathway is amino-acid biosynthesis; L-histidine biosynthesis; L-histidine from 5-phospho-alpha-D-ribose 1-diphosphate: step 5/9. Functionally, IGPS catalyzes the conversion of PRFAR and glutamine to IGP, AICAR and glutamate. The HisF subunit catalyzes the cyclization activity that produces IGP and AICAR from PRFAR using the ammonia provided by the HisH subunit. The sequence is that of Imidazole glycerol phosphate synthase subunit HisF from Mycobacterium ulcerans (strain Agy99).